A 184-amino-acid polypeptide reads, in one-letter code: Probable cobalt-precorrin-6B C(15)-methyltransferase (decarboxylating) (184 aa).

S-adenosyl-L-methionine is bound by residues Thr-12, 36 to 40 (GCGTG), Asp-59, and Ala-87.

This sequence belongs to the methyltransferase superfamily. Archaeal-type CbiT family.

It carries out the reaction Co-precorrin-6B + S-adenosyl-L-methionine = Co-precorrin-7 + S-adenosyl-L-homocysteine + CO2. It participates in cofactor biosynthesis; adenosylcobalamin biosynthesis; cob(II)yrinate a,c-diamide from sirohydrochlorin (anaerobic route): step 8/10. Catalyzes the methylation of C-15 in cobalt-precorrin-6B followed by the decarboxylation of C-12 to form cobalt-precorrin-7. This chain is Probable cobalt-precorrin-6B C(15)-methyltransferase (decarboxylating), found in Methanosarcina acetivorans (strain ATCC 35395 / DSM 2834 / JCM 12185 / C2A).